Here is a 391-residue protein sequence, read N- to C-terminus: Enoyl-CoA delta isomerase 2 (391 aa).

The transit peptide at 1 to 36 directs the protein to the mitochondrion; that stretch reads MAAVTWSRARCWCPSLLQVLRLPVTKLHLGRPAMRA. The region spanning 37 to 122 is the ACB domain; that stretch reads TQQDFENAMN…VSSLSSSSEA (86 aa). Residue K49 is modified to N6-acetyllysine; alternate. K49 carries the post-translational modification N6-succinyllysine; alternate. K53 is modified (N6-succinyllysine). K60 is modified (N6-acetyllysine; alternate). Residue K60 is modified to N6-succinyllysine; alternate. Residue 64–68 participates in an acyl-CoA binding; sequence YALYK. An N6-succinyllysine mark is found at K68, K79, and K88. Residue K90 is modified to N6-acetyllysine; alternate. K90 bears the N6-succinyllysine; alternate mark. Position 90 (K90) interacts with an acyl-CoA. At S99 the chain carries Phosphoserine. Y109 provides a ligand contact to an acyl-CoA. S117 bears the Phosphoserine mark. N6-succinyllysine is present on residues K127 and K159. Positions 149-319 are ECH-like; the sequence is TKITFNRPSK…AQGLVTEVFP (171 aa). 196–200 is a binding site for substrate; the sequence is SGNDL. Position 286 is an N6-succinyllysine (K286). The Microbody targeting signal motif lies at 389–391; sequence PKL.

In the C-terminal section; belongs to the enoyl-CoA hydratase/isomerase family. In terms of tissue distribution, liver (at protein level).

The protein localises to the peroxisome matrix. Its subcellular location is the mitochondrion. It catalyses the reaction a (3Z)-enoyl-CoA = a 4-saturated (2E)-enoyl-CoA. The catalysed reaction is a (3E)-enoyl-CoA = a 4-saturated (2E)-enoyl-CoA. The enzyme catalyses (2E)-tetradecenoyl-CoA = (3Z)-tetradecenoyl-CoA. It carries out the reaction (3E)-tetradecenoyl-CoA = (2E)-tetradecenoyl-CoA. It catalyses the reaction (3E)-octenoyl-CoA = (2E)-octenoyl-CoA. The catalysed reaction is (3Z)-octenoyl-CoA = (2E)-octenoyl-CoA. The enzyme catalyses (3E)-nonenoyl-CoA = (2E)-nonenoyl-CoA. It functions in the pathway lipid metabolism; fatty acid beta-oxidation. Its function is as follows. Able to isomerize both 3-cis and 3-trans double bonds into the 2-trans form in a range of enoyl-CoA species. Has a preference for 3-trans substrates. The protein is Enoyl-CoA delta isomerase 2 of Rattus norvegicus (Rat).